The primary structure comprises 628 residues: Probable potassium transport system protein Kup (628 aa).

The next 12 membrane-spanning stretches (helical) occupy residues 12–32 (ALPL…IGTS), 57–77 (LLSL…VMLV), 106–126 (WYLL…GVLT), 141–161 (ISPA…AAVF), 174–194 (FYGP…VYGI), 219–239 (LAGV…ALYA), 253–273 (WLFV…AILL), 295–315 (LLFL…TGVF), 343–363 (IYVG…VLGF), 369–389 (LASA…ILFV), 402–422 (AVIA…SANL), and 425–445 (LHEG…VMVS).

This sequence belongs to the HAK/KUP transporter (TC 2.A.72) family.

It localises to the cell inner membrane. The catalysed reaction is K(+)(in) + H(+)(in) = K(+)(out) + H(+)(out). Functionally, transport of potassium into the cell. Likely operates as a K(+):H(+) symporter. In Azorhizobium caulinodans (strain ATCC 43989 / DSM 5975 / JCM 20966 / LMG 6465 / NBRC 14845 / NCIMB 13405 / ORS 571), this protein is Probable potassium transport system protein Kup.